The primary structure comprises 123 residues: Small ribosomal subunit protein uS12 (123 aa).

Positions 11–32 are disordered; that stretch reads PRQEKTYREKARHLGASPQKRG. Position 89 is a 3-methylthioaspartic acid (Asp89).

The protein belongs to the universal ribosomal protein uS12 family. In terms of assembly, part of the 30S ribosomal subunit. Contacts proteins S8 and S17. May interact with IF1 in the 30S initiation complex.

Its function is as follows. With S4 and S5 plays an important role in translational accuracy. Functionally, interacts with and stabilizes bases of the 16S rRNA that are involved in tRNA selection in the A site and with the mRNA backbone. Located at the interface of the 30S and 50S subunits, it traverses the body of the 30S subunit contacting proteins on the other side and probably holding the rRNA structure together. The combined cluster of proteins S8, S12 and S17 appears to hold together the shoulder and platform of the 30S subunit. In Methylocella silvestris (strain DSM 15510 / CIP 108128 / LMG 27833 / NCIMB 13906 / BL2), this protein is Small ribosomal subunit protein uS12.